A 119-amino-acid chain; its full sequence is Large ribosomal subunit protein uL18 (119 aa).

This sequence belongs to the universal ribosomal protein uL18 family. In terms of assembly, part of the 50S ribosomal subunit; part of the 5S rRNA/L5/L18/L25 subcomplex. Contacts the 5S and 23S rRNAs.

Its function is as follows. This is one of the proteins that bind and probably mediate the attachment of the 5S RNA into the large ribosomal subunit, where it forms part of the central protuberance. The polypeptide is Large ribosomal subunit protein uL18 (Malacoplasma penetrans (strain HF-2) (Mycoplasma penetrans)).